A 243-amino-acid chain; its full sequence is Fibroblast growth factor 12 (243 aa).

2 disordered regions span residues 1 to 39 (MAAA…DGRS) and 216 to 243 (IGEK…QDST). The short motif at 11 to 38 (RQKRQARESNSDRVSASKRRSSPSKDGR) is the Bipartite nuclear localization signal element.

Belongs to the heparin-binding growth factors family. As to quaternary structure, interacts with the C-terminal region of SCN9A. Brain, eye and testis; highly expressed in embryonic retina, olfactory epithelium, olfactory bulb, and in a segmental pattern of the body wall; in adult olfactory bulb, less in cerebellum, deep cerebellar nuclei, cortex and multiple midbrain structures.

Its subcellular location is the nucleus. Functionally, involved in nervous system development and function. Involved in the positive regulation of voltage-gated sodium channel activity. Promotes neuronal excitability by elevating the voltage dependence of neuronal sodium channel SCN8A fast inactivation. In Homo sapiens (Human), this protein is Fibroblast growth factor 12 (FGF12).